The following is a 345-amino-acid chain: S-adenosylmethionine:tRNA ribosyltransferase-isomerase (345 aa).

This sequence belongs to the QueA family. In terms of assembly, monomer.

Its subcellular location is the cytoplasm. It carries out the reaction 7-aminomethyl-7-carbaguanosine(34) in tRNA + S-adenosyl-L-methionine = epoxyqueuosine(34) in tRNA + adenine + L-methionine + 2 H(+). It functions in the pathway tRNA modification; tRNA-queuosine biosynthesis. In terms of biological role, transfers and isomerizes the ribose moiety from AdoMet to the 7-aminomethyl group of 7-deazaguanine (preQ1-tRNA) to give epoxyqueuosine (oQ-tRNA). This is S-adenosylmethionine:tRNA ribosyltransferase-isomerase from Rhodospirillum rubrum (strain ATCC 11170 / ATH 1.1.1 / DSM 467 / LMG 4362 / NCIMB 8255 / S1).